We begin with the raw amino-acid sequence, 369 residues long: Glycine oxidase (369 aa).

FAD is bound by residues 14 to 15, 34 to 35, 42 to 43, 47 to 49, and valine 174; these read II, ES, AT, and AGM. The substrate site is built by arginine 302 and arginine 329. 327-333 provides a ligand contact to FAD; it reads HFRNGIL.

It belongs to the DAO family. ThiO subfamily. Homotetramer. The cofactor is FAD.

It catalyses the reaction glycine + O2 + H2O = glyoxylate + H2O2 + NH4(+). The catalysed reaction is glyphosate + O2 + H2O = aminomethylphosphonate + glyoxylate + H2O2 + H(+). It carries out the reaction N-ethylglycine + O2 + H2O = ethylamine + glyoxylate + H2O2. The enzyme catalyses sarcosine + O2 + H2O = methylamine + glyoxylate + H2O2. It catalyses the reaction D-alanine + O2 + H2O = pyruvate + H2O2 + NH4(+). It participates in cofactor biosynthesis; thiamine diphosphate biosynthesis. Functionally, catalyzes the FAD-dependent oxidative deamination of glycine, leading to glyoxylate, ammonia and hydrogen peroxide. Is also able to act on various amines and D-amino acids to yield the corresponding alpha-keto acids, ammonia/amine, and hydrogen peroxide. Can also oxidize the herbicide glyphosate (N-phosphonomethylglycine), and thus may be involved in the degradation pathway that allows B.licheniformis J33-8 to grow with glyphosate as the sole source of carbon. Is essential for thiamine biosynthesis since the oxidation of glycine catalyzed by ThiO generates the glycine imine intermediate (dehydroglycine) required for the biosynthesis of the thiazole ring of thiamine pyrophosphate. The sequence is that of Glycine oxidase from Bacillus licheniformis.